Here is a 2335-residue protein sequence, read N- to C-terminus: Histone-lysine N-methyltransferase ATXR3 (2335 aa).

Disordered regions lie at residues 30–142 (NESK…FKDE), 332–355 (STGN…SYAD), 371–556 (CSRS…SSSK), and 902–961 (DQVP…KTDT). Composition is skewed to polar residues over residues 31 to 46 (ESKT…TSIA) and 53 to 62 (QPANKPSASS). The span at 65–84 (VKKKRIVKVIRKVVKRRPKQ) shows a compositional bias: basic residues. The Nuclear localization signal 1 signature appears at 67 to 74 (KKRIVKVI). Positions 97–112 (PPSQVVQLPAESQLQI) are enriched in polar residues. Composition is skewed to basic and acidic residues over residues 340–353 (HGAE…KHSY), 371–390 (CSRS…RLYR), and 430–452 (WSPH…RERS). A compositionally biased stretch (basic residues) spans 461–475 (HARKRSPRDRRHHDY). 3 stretches are compositionally biased toward basic and acidic residues: residues 485 to 498 (SPHD…RRDY), 507 to 548 (QSDR…ESNG), and 910 to 921 (PRAKVRSKERCP). The short motif at 527–534 (ERRDCQTG) is the Nuclear localization signal 2 element. The segment covering 922-932 (SRPARPSPASS) has biased composition (low complexity). Positions 941–961 (SHSQSTASTGQDSQGLWKTDT) are enriched in polar residues. The Nuclear localization signal 3 signature appears at 1382 to 1389 (ARRSSAIL). Residues 1532-1572 (NRKSFSSESDTSSELSDNGKSDNYSSASASESESDIRSEGR) are disordered. Residues 1535 to 1547 (SFSSESDTSSELS) show a composition bias toward low complexity. The SET domain maps to 1765–1904 (KEIESRSDDK…YGEEITFDYN (140 aa)). A Zn(2+)-binding site is contributed by cysteine 1868. Tyrosine 1903 lines the S-adenosyl-L-methionine pocket. Residues 1914 to 1930 (EASVCLCGSQVCRGSYL) form the Post-SET domain. Residues cysteine 1918, cysteine 1920, and cysteine 1925 each coordinate Zn(2+).

It belongs to the class V-like SAM-binding methyltransferase superfamily. Histone-lysine methyltransferase family. TRX/MLL subfamily. In terms of tissue distribution, expressed in roots, leaves, stems and inflorescences.

The protein localises to the nucleus. The enzyme catalyses L-lysyl(4)-[histone H3] + 3 S-adenosyl-L-methionine = N(6),N(6),N(6)-trimethyl-L-lysyl(4)-[histone H3] + 3 S-adenosyl-L-homocysteine + 3 H(+). In terms of biological role, histone methyltransferase specifically required for trimethylation of 'Lys-4' of histone H3 (H3K4me3) and is crucial for both sporophyte and gametophyte development. Function as a diurnal 'writer' to counteract the nocturne 'eraser' demethylase activity of JMJ14 thus orchestrating the circadian rhythm of histone modifications (e.g. H3K4me3) and modulating the rhythmic expression of diurnal target genes; this mechanism relies also on the circadian clock oscillators CCA1 and LHY. This is Histone-lysine N-methyltransferase ATXR3 from Arabidopsis thaliana (Mouse-ear cress).